The sequence spans 429 residues: uncharacterized protein (429 aa).

10 helical membrane-spanning segments follow: residues 26–46, 51–71, 99–119, 135–155, 173–193, 223–243, 278–298, 311–331, 361–381, and 407–427; these read VALTGAAAVVVLPVITSHDIF, TGIDWDVIFLLVGMMIIVGVL, LVLVSALASALLDNVTTVLLI, TSFLMAEVFASNIGGAATLVG, FMLHLTPLVVIVLIALIAVLP, LLVKCGAVLVLVFAAFVAHPV, TLLFFAGLFIMVGALVKTGVV, GNIVATAFLILGVSAPISGII, WWALALGADFGGNLTAIGASA, and VVTAVSIALAAIYLWLRYFVL.

Belongs to the CitM (TC 2.A.11) transporter family.

It is found in the cell membrane. This is an uncharacterized protein from Mycobacterium tuberculosis (strain ATCC 25618 / H37Rv).